A 393-amino-acid chain; its full sequence is Lipid-A-disaccharide synthase (393 aa).

This sequence belongs to the LpxB family.

The catalysed reaction is a lipid X + a UDP-2-N,3-O-bis[(3R)-3-hydroxyacyl]-alpha-D-glucosamine = a lipid A disaccharide + UDP + H(+). Its pathway is bacterial outer membrane biogenesis; LPS lipid A biosynthesis. Condensation of UDP-2,3-diacylglucosamine and 2,3-diacylglucosamine-1-phosphate to form lipid A disaccharide, a precursor of lipid A, a phosphorylated glycolipid that anchors the lipopolysaccharide to the outer membrane of the cell. This Bordetella pertussis (strain Tohama I / ATCC BAA-589 / NCTC 13251) protein is Lipid-A-disaccharide synthase.